We begin with the raw amino-acid sequence, 223 residues long: Ubiquitin-conjugating enzyme E2 S-A (223 aa).

In terms of domain architecture, UBC core spans 11–157 (HIIRLVYKEV…ARLLTEIHGG (147 aa)). The Glycyl thioester intermediate role is filled by C95. Residues 170 to 223 (QDLASGASASSADPMIPGVLGGAEGPMAKKHAGERDKKLAAKKKLDKKRALRRL) form a disordered region. Positions 209 to 223 (AAKKKLDKKRALRRL) are enriched in basic residues.

It belongs to the ubiquitin-conjugating enzyme family.

It carries out the reaction S-ubiquitinyl-[E1 ubiquitin-activating enzyme]-L-cysteine + [E2 ubiquitin-conjugating enzyme]-L-cysteine = [E1 ubiquitin-activating enzyme]-L-cysteine + S-ubiquitinyl-[E2 ubiquitin-conjugating enzyme]-L-cysteine.. The protein operates within protein modification; protein ubiquitination. In terms of biological role, catalyzes the covalent attachment of ubiquitin to other proteins. Acts as an essential factor of the anaphase promoting complex/cyclosome (APC/C), a cell cycle-regulated ubiquitin ligase that controls progression through mitosis. Acts by specifically elongating 'Lys-11'-linked polyubiquitin chains initiated by the E2 enzyme ube2c/ubch10 on APC/C substrates, enhancing the degradation of APC/C substrates by the proteasome and promoting mitotic exit. This chain is Ubiquitin-conjugating enzyme E2 S-A (ube2s-a), found in Xenopus laevis (African clawed frog).